The chain runs to 362 residues: Protein-arginine kinase (362 aa).

One can recognise a Phosphagen kinase C-terminal domain in the interval 24 to 255 (IVLSSRIRLA…QQLIAQERMA (232 aa)). Residues 27–31 (SSRIR), His-92, Arg-126, 177–181 (RASVM), and 208–213 (RGTYGE) contribute to the ATP site. The RDXXRA motif of the pArg binding pocket involved in allosteric regulation signature appears at 338 to 343 (RDVRRA).

This sequence belongs to the ATP:guanido phosphotransferase family.

The enzyme catalyses L-arginyl-[protein] + ATP = N(omega)-phospho-L-arginyl-[protein] + ADP + H(+). With respect to regulation, appears to be allosterically activated by the binding of pArg-containing polypeptides to the pArg-binding pocket localized in the C-terminal domain of McsB. In terms of biological role, catalyzes the specific phosphorylation of arginine residues in a large number of proteins. Is part of the bacterial stress response system. Protein arginine phosphorylation has a physiologically important role and is involved in the regulation of many critical cellular processes, such as protein homeostasis, motility, competence, and stringent and stress responses, by regulating gene expression and protein activity. This is Protein-arginine kinase from Geobacillus sp. (strain WCH70).